Consider the following 277-residue polypeptide: Sulfur carrier protein FdhD (277 aa).

Cysteine 121 functions as the Cysteine persulfide intermediate in the catalytic mechanism. A Mo-bis(molybdopterin guanine dinucleotide)-binding site is contributed by 260–265 (FCKPGR).

Belongs to the FdhD family.

Its subcellular location is the cytoplasm. Functionally, required for formate dehydrogenase (FDH) activity. Acts as a sulfur carrier protein that transfers sulfur from IscS to the molybdenum cofactor prior to its insertion into FDH. The protein is Sulfur carrier protein FdhD of Escherichia coli O6:H1 (strain CFT073 / ATCC 700928 / UPEC).